A 434-amino-acid polypeptide reads, in one-letter code: Alpha-enolase (434 aa).

The residue at position 2 (Ser-2) is an N-acetylserine. Residue Lys-5 is modified to N6-acetyllysine. Mg(2+) is bound at residue Ser-40. Tyr-44 is subject to Phosphotyrosine. Lys-60 is subject to N6-acetyllysine; alternate. An N6-succinyllysine; alternate modification is found at Lys-60. An N6-acetyllysine mark is found at Lys-64 and Lys-71. An N6-acetyllysine; alternate modification is found at Lys-89. Lys-89 carries the post-translational modification N6-succinyllysine; alternate. An N6-acetyllysine mark is found at Lys-92 and Lys-126. His-158 and Glu-167 together coordinate substrate. An N6-acetyllysine mark is found at Lys-193 and Lys-199. An N6-acetyllysine; alternate modification is found at Lys-202. Lys-202 is covalently cross-linked (Glycyl lysine isopeptide (Lys-Gly) (interchain with G-Cter in SUMO2); alternate). Glu-210 acts as the Proton donor in catalysis. An N6-acetyllysine; alternate mark is found at Lys-228 and Lys-233. Lys-228 is subject to N6-succinyllysine; alternate. At Lys-228 the chain carries N6-(2-hydroxyisobutyryl)lysine; alternate. The residue at position 233 (Lys-233) is an N6-malonyllysine; alternate. Asp-245 contributes to the Mg(2+) binding site. Ser-254 carries the phosphoserine modification. The residue at position 256 (Lys-256) is an N6-acetyllysine. Position 263 is a phosphoserine (Ser-263). At Lys-281 the chain carries N6-acetyllysine; alternate. Lys-281 bears the N6-(2-hydroxyisobutyryl)lysine; alternate mark. At Tyr-287 the chain carries Phosphotyrosine. A Phosphoserine modification is found at Ser-291. Mg(2+)-binding residues include Glu-293 and Asp-318. Residues Glu-293 and Asp-318 each coordinate substrate. Lys-335 and Lys-343 each carry N6-acetyllysine. Residue Lys-343 is the Proton acceptor of the active site. Residues 370–373 (SHRS) and Lys-394 each bind substrate. Positions 405–434 (AKYNQILRIEEELGSKAKFAGRSFRNPLAK) are required for interaction with PLG. N6-acetyllysine is present on Lys-406. Position 420 is an N6-acetyllysine; alternate (Lys-420). Lys-420 carries the post-translational modification N6-succinyllysine; alternate. Lys-420 is modified (N6-malonyllysine; alternate).

Belongs to the enolase family. Mammalian enolase is composed of 3 isozyme subunits, alpha, beta and gamma, which can form homodimers or heterodimers which are cell-type and development-specific. ENO1 interacts with PLG in the neuronal plasma membrane and promotes its activation. The C-terminal lysine is required for this binding. Interacts with ENO4 and PGAM2. Interacts with CMTM6. The cofactor is Mg(2+). Post-translationally, ISGylated. In terms of processing, lysine 2-hydroxyisobutyrylation (Khib) by p300/EP300 activates the phosphopyruvate hydratase activity. As to expression, the alpha/alpha homodimer is expressed in embryo and in most adult tissues. The alpha/beta heterodimer and the beta/beta homodimer are found in striated muscle, and the alpha/gamma heterodimer and the gamma/gamma homodimer in neurons.

The protein localises to the cytoplasm. It is found in the cell membrane. It carries out the reaction (2R)-2-phosphoglycerate = phosphoenolpyruvate + H2O. The protein operates within carbohydrate degradation; glycolysis; pyruvate from D-glyceraldehyde 3-phosphate: step 4/5. Functionally, glycolytic enzyme the catalyzes the conversion of 2-phosphoglycerate to phosphoenolpyruvate. In addition to glycolysis, involved in various processes such as growth control, hypoxia tolerance and allergic responses. May also function in the intravascular and pericellular fibrinolytic system due to its ability to serve as a receptor and activator of plasminogen on the cell surface of several cell-types such as leukocytes and neurons. Stimulates immunoglobulin production. This is Alpha-enolase (ENO1) from Bos taurus (Bovine).